A 104-amino-acid chain; its full sequence is Nucleoid-associated protein Bsph_0039 (104 aa).

The segment covering 1–12 (MRGMGNMQGMMK) has biased composition (low complexity). Residues 1 to 22 (MRGMGNMQGMMKKMQKMQKEMM) form a disordered region.

It belongs to the YbaB/EbfC family. As to quaternary structure, homodimer.

The protein localises to the cytoplasm. It localises to the nucleoid. Binds to DNA and alters its conformation. May be involved in regulation of gene expression, nucleoid organization and DNA protection. This is Nucleoid-associated protein Bsph_0039 from Lysinibacillus sphaericus (strain C3-41).